The primary structure comprises 331 residues: Olfactory receptor 6K3 (331 aa).

The Extracellular portion of the chain corresponds to Met1 to Leu41. An N-linked (GlcNAc...) asparagine glycan is attached at Asn21. The chain crosses the membrane as a helical span at residues Leu42–Phe62. Residues Ser63–His70 lie on the Cytoplasmic side of the membrane. A helical membrane pass occupies residues Leu71 to Thr91. At Ala92–Leu115 the chain is on the extracellular side. Residues Cys113 and Cys205 are joined by a disulfide bond. A helical transmembrane segment spans residues Gln116–Ile136. Residues Asp137–Arg155 are Cytoplasmic-facing. The chain crosses the membrane as a helical span at residues Leu156 to Ile176. Residues Val177–Leu212 lie on the Extracellular side of the membrane. The chain crosses the membrane as a helical span at residues Ile213–Ser232. Residues Tyr233–Ala252 lie on the Cytoplasmic side of the membrane. The chain crosses the membrane as a helical span at residues Phe253–Met273. The Extracellular segment spans residues Tyr274 to Asp286. A helical transmembrane segment spans residues Thr287–Leu307. Over Arg308 to Gly331 the chain is Cytoplasmic.

This sequence belongs to the G-protein coupled receptor 1 family.

The protein resides in the cell membrane. Functionally, odorant receptor. The polypeptide is Olfactory receptor 6K3 (OR6K3) (Homo sapiens (Human)).